The chain runs to 331 residues: DNA fragmentation factor subunit alpha (331 aa).

M1 bears the N-acetylmethionine mark. The region spanning 17-96 (PLKPCLLRRN…ALACNEKWIY (80 aa)) is the CIDE-N domain. T243 is subject to Phosphothreonine. A disordered region spans residues 306–331 (LRNLSARRSPLPGEPQRPKRAKRDSS).

As to quaternary structure, heterodimer of DFFA and DFFB. In terms of processing, caspase-3 cleaves DFF45 at 2 sites to generate an active factor.

The protein resides in the cytoplasm. In terms of biological role, inhibitor of the caspase-activated DNase (DFF40). The sequence is that of DNA fragmentation factor subunit alpha (Dffa) from Mus musculus (Mouse).